Consider the following 333-residue polypeptide: Glycerol-3-phosphate dehydrogenase [NAD(P)+] (333 aa).

3 residues coordinate NADPH: W11, R30, and K105. Sn-glycerol 3-phosphate is bound by residues K105, G133, and S135. Position 137 (A137) interacts with NADPH. Sn-glycerol 3-phosphate-binding residues include K188, D241, S251, R252, and N253. Residue K188 is the Proton acceptor of the active site. R252 contacts NADPH. Positions 276 and 278 each coordinate NADPH.

It belongs to the NAD-dependent glycerol-3-phosphate dehydrogenase family.

The protein localises to the cytoplasm. The catalysed reaction is sn-glycerol 3-phosphate + NAD(+) = dihydroxyacetone phosphate + NADH + H(+). It catalyses the reaction sn-glycerol 3-phosphate + NADP(+) = dihydroxyacetone phosphate + NADPH + H(+). It functions in the pathway membrane lipid metabolism; glycerophospholipid metabolism. Catalyzes the reduction of the glycolytic intermediate dihydroxyacetone phosphate (DHAP) to sn-glycerol 3-phosphate (G3P), the key precursor for phospholipid synthesis. The polypeptide is Glycerol-3-phosphate dehydrogenase [NAD(P)+] (Methylibium petroleiphilum (strain ATCC BAA-1232 / LMG 22953 / PM1)).